The chain runs to 443 residues: MKFHLISLGCAKNLVDSEVVLGCLRDAGWEMTDEQDADLLLVNTCGFIQPAVEEAVEEILALVDIKADFPEKKIVVLGCLVQRYKEQLLESLPEVDLFVGTEGVANIAEYVGKLIAGEEQDKVIMPTEFLMTAKVPRQQSTPFFRAWVKITEGCDNRCSYCMIPSIRGPLRSRSVADVLEEVQAMVASGVQEISLIAQDLTAYGDDLGDDVNLLVLLKELLAKTSVPWIRLLYLYPSELLDELLQLMAANPRIVKYLDIPIQHVNDRVLHLMNRPYGRADLEEFVDKARAHMPDIALRTTFLVGFPGETEEEYAEIGEFLRVRKLDHVGVFPYSNEEGAPSEHFPDQVDDEIKESRCARLLELQQELSTEIQKKYVGTVQKVLVEGVSEETDLLLEGRTQYQAADVDGRVYINEGQVVAGEIVDILITDSQQYDLVGGVVSVE.

Residues methionine 1–alanine 116 enclose the MTTase N-terminal domain. Positions 10, 45, 79, 154, 158, and 161 each coordinate [4Fe-4S] cluster. In terms of domain architecture, Radical SAM core spans serine 140–glutamate 370. Positions lysine 373 to serine 441 constitute a TRAM domain.

The protein belongs to the methylthiotransferase family. RimO subfamily. [4Fe-4S] cluster serves as cofactor.

The protein resides in the cytoplasm. The enzyme catalyses L-aspartate(89)-[ribosomal protein uS12]-hydrogen + (sulfur carrier)-SH + AH2 + 2 S-adenosyl-L-methionine = 3-methylsulfanyl-L-aspartate(89)-[ribosomal protein uS12]-hydrogen + (sulfur carrier)-H + 5'-deoxyadenosine + L-methionine + A + S-adenosyl-L-homocysteine + 2 H(+). Catalyzes the methylthiolation of an aspartic acid residue of ribosomal protein uS12. In Desulfotalea psychrophila (strain LSv54 / DSM 12343), this protein is Ribosomal protein uS12 methylthiotransferase RimO.